The primary structure comprises 132 residues: RuBisCO chaperone RbcX (132 aa).

The disordered stretch occupies residues 110–132 (HLSLSNPSPESEQQTISDTDWDH). Polar residues predominate over residues 111–132 (LSLSNPSPESEQQTISDTDWDH).

The protein belongs to the RbcX family. Homodimer. Interacts with the exposed C-terminal peptide of RbcL via its central cleft, contacts a second RbcL monomer via its peripheral polar surface. RbcX and Raf1 can bind simultaneously to RbcL.

The protein resides in the carboxysome. Its subcellular location is the cytoplasm. Functionally, an RbcL-specific chaperone. The central cleft of the RbcX homodimer (RbcX2) binds the C-terminus of an RbcL monomer, stabilizing the C-terminus and probably preventing its reassociation with chaperonin GroEL-ES. At the same time the peripheral region of RbcX2 binds a second RbcL monomer, bridging the RbcL homodimers in the correct orientation. The RbcX2(2)-bound RbcL dimers then assemble into the RbcL8 core (RbcL8-(RbcX2)8). RbcS binding triggers the release of RbcX2. When rbcL-rbcX-rbcS or rbcL-rbcS were overexpressed in E.coli no change in reconstituted RuBisCO activity was observed, which suggests RbcX plays no role in RuBisCO assembly in this system. However in PubMed:8472962 E.coli chaperones groL and groS were also overexpressed, which may compensate for lack of rbcX. The sequence is that of RuBisCO chaperone RbcX from Nostoc sp. (strain PCC 7120 / SAG 25.82 / UTEX 2576).